Consider the following 118-residue polypeptide: Co-chaperonin GroES (118 aa).

Belongs to the GroES chaperonin family. In terms of assembly, heptamer of 7 subunits arranged in a ring. Interacts with the chaperonin GroEL.

Its subcellular location is the cytoplasm. In terms of biological role, together with the chaperonin GroEL, plays an essential role in assisting protein folding. The GroEL-GroES system forms a nano-cage that allows encapsulation of the non-native substrate proteins and provides a physical environment optimized to promote and accelerate protein folding. GroES binds to the apical surface of the GroEL ring, thereby capping the opening of the GroEL channel. The protein is Co-chaperonin GroES of Helicobacter acinonychis (strain Sheeba).